Here is a 125-residue protein sequence, read N- to C-terminus: Small ribosomal subunit protein uS13 (125 aa).

Residues 92 to 125 (RRSLPVRGQRTRTNARTRKGKRKTVAGKKKAVKK) form a disordered region.

This sequence belongs to the universal ribosomal protein uS13 family. In terms of assembly, part of the 30S ribosomal subunit. Forms a loose heterodimer with protein S19. Forms two bridges to the 50S subunit in the 70S ribosome.

Its function is as follows. Located at the top of the head of the 30S subunit, it contacts several helices of the 16S rRNA. In the 70S ribosome it contacts the 23S rRNA (bridge B1a) and protein L5 of the 50S subunit (bridge B1b), connecting the 2 subunits; these bridges are implicated in subunit movement. Contacts the tRNAs in the A and P-sites. In Pelodictyon phaeoclathratiforme (strain DSM 5477 / BU-1), this protein is Small ribosomal subunit protein uS13.